The chain runs to 761 residues: DNA topoisomerase 1 (761 aa).

The 138-residue stretch at 6 to 143 folds into the Toprim domain; the sequence is TALIICEKPS…KRMRFSSLTK (138 aa). Mg(2+) contacts are provided by Glu-12 and Asp-111. Residues 157–569 form the Topo IA-type catalytic domain; that stretch reads DYGLVDAGES…EAEKRLRKIL (413 aa). The segment at 196-201 is interaction with DNA; it reads SVGRVQ. Tyr-315 acts as the O-(5'-phospho-DNA)-tyrosine intermediate in catalysis. C4-type zinc fingers lie at residues 600–626, 680–706, and 721–747; these read CPKC…YPEC and CPKC…YPKC.

The protein belongs to the type IA topoisomerase family. Monomer. Mg(2+) serves as cofactor.

It carries out the reaction ATP-independent breakage of single-stranded DNA, followed by passage and rejoining.. In terms of biological role, releases the supercoiling and torsional tension of DNA, which is introduced during the DNA replication and transcription, by transiently cleaving and rejoining one strand of the DNA duplex. Introduces a single-strand break via transesterification at a target site in duplex DNA. The scissile phosphodiester is attacked by the catalytic tyrosine of the enzyme, resulting in the formation of a DNA-(5'-phosphotyrosyl)-enzyme intermediate and the expulsion of a 3'-OH DNA strand. The free DNA strand then undergoes passage around the unbroken strand, thus removing DNA supercoils. Finally, in the religation step, the DNA 3'-OH attacks the covalent intermediate to expel the active-site tyrosine and restore the DNA phosphodiester backbone. In Methanocaldococcus jannaschii (strain ATCC 43067 / DSM 2661 / JAL-1 / JCM 10045 / NBRC 100440) (Methanococcus jannaschii), this protein is DNA topoisomerase 1.